Here is a 667-residue protein sequence, read N- to C-terminus: mRNA cap guanine-N(7) methyltransferase (667 aa).

Residues 1-19 show a composition bias toward basic and acidic residues; it reads MYDPARDSWEERDGDEARS. The disordered stretch occupies residues 1–272; that stretch reads MYDPARDSWE…RRRQEERERA (272 aa). A compositionally biased stretch (polar residues) spans 33 to 52; it reads FSSSEQIYGASGENNNTTDL. The span at 72-87 shows a compositional bias: low complexity; it reads SPPAQSTTQTPPSIST. Polar residues predominate over residues 88 to 128; the sequence is HVQSPVNPAAQEASNTQSLTSAAQNQSNKSTTTMDNTSGSA. Residues 132–142 are compositionally biased toward basic and acidic residues; that stretch reads PRADPSDKSNR. Residues 147 to 156 show a composition bias toward polar residues; it reads ASPTDQNGSQ. The segment covering 256–272 has biased composition (basic and acidic residues); sequence LVDRETLRRRQEERERA. Positions 309-667 constitute an mRNA cap 0 methyltransferase domain; sequence SKIKGLRSFN…FYHAFCFYKV (359 aa). 318–319 is a binding site for mRNA; that stretch reads NN. Residues lysine 322, glycine 365, aspartate 389, aspartate 427, 470-472, and tyrosine 475 each bind S-adenosyl-L-methionine; that span reads MFT. The segment covering 521–535 has biased composition (basic and acidic residues); that stretch reads KKERQSQAKKEKTDE. The segment at 521 to 547 is disordered; it reads KKERQSQAKKEKTDEAPEDGEVEEDDG. The segment covering 536-547 has biased composition (acidic residues); sequence APEDGEVEEDDG.

This sequence belongs to the class I-like SAM-binding methyltransferase superfamily. mRNA cap 0 methyltransferase family.

It localises to the nucleus. The catalysed reaction is a 5'-end (5'-triphosphoguanosine)-ribonucleoside in mRNA + S-adenosyl-L-methionine = a 5'-end (N(7)-methyl 5'-triphosphoguanosine)-ribonucleoside in mRNA + S-adenosyl-L-homocysteine. Responsible for methylating the 5'-cap structure of mRNAs. The sequence is that of mRNA cap guanine-N(7) methyltransferase (abd1) from Neosartorya fischeri (strain ATCC 1020 / DSM 3700 / CBS 544.65 / FGSC A1164 / JCM 1740 / NRRL 181 / WB 181) (Aspergillus fischerianus).